The chain runs to 306 residues: uncharacterized protein (306 aa).

The next 9 membrane-spanning stretches (helical) occupy residues 6–26 (VQIMISHSLMIGLWASAFPGI), 37–57 (HLALFRLLIGSMALLLFAVLT), 67–87 (IPAIFLLGFLGFAFYHILLNI), 91–111 (TVSAGVASLLVTTAPIFSAML), 125–145 (WLGSMISLLGVLLIAFGAGDF), 148–168 (SMSGILVILLAAFSESIYFVF), 177–197 (GFIPFVTFTIWGGTIPMLVFL), 213–233 (LSIVYLGLLPTVIPYFALAYV), and 251–271 (ALALIISWLWIGEIPTLLSLL). EamA domains follow at residues 17-140 (GLWA…LIAF) and 160-285 (FSES…FTYL).

Belongs to the EamA transporter family.

It is found in the cell membrane. This is an uncharacterized protein from Bacillus subtilis (strain 168).